The primary structure comprises 106 residues: Thioredoxin-2 (106 aa).

The region spanning 2–106 (VYQIKDKADL…RLEDVIKANI (105 aa)) is the Thioredoxin domain. Active-site nucleophile residues include Cys-32 and Cys-35. Residues Cys-32 and Cys-35 are joined by a disulfide bond.

It belongs to the thioredoxin family.

Participates in various redox reactions through the reversible oxidation of its active center dithiol to a disulfide and catalyzes dithiol-disulfide exchange reactions. As a reducing substrate of peroxiredoxin 1, thioredoxin 2 is preferred over thioredoxin 1. In Drosophila yakuba (Fruit fly), this protein is Thioredoxin-2.